The sequence spans 380 residues: Actinidain (380 aa).

Positions Met1–Ala24 are cleaved as a signal peptide. Residues Phe25–Val126 constitute a propeptide, activation peptide. Intrachain disulfides connect Cys148–Cys191, Cys182–Cys224, and Cys282–Cys332. Cys151 is a catalytic residue. Cys151 provides a ligand contact to E64. Active-site residues include His288 and Asn308.

This sequence belongs to the peptidase C1 family. Fruit.

The enzyme catalyses Specificity close to that of papain.. Repressed by the active-site-directed cysteine protease inhibitor E64 (L-trans-epoxysuccinyl-leucylamide-(4-guanido)-butane) produced by Aspergillus japonicus. Cysteine protease responsible for the cleavage of kiwellin into kissper and KiTH. This Actinidia chinensis var. chinensis (Chinese soft-hair kiwi) protein is Actinidain.